Consider the following 244-residue polypeptide: Tubulin-folding cofactor B (244 aa).

The residue at position 1 (methionine 1) is an N-acetylmethionine. A Phosphotyrosine modification is found at tyrosine 98. A Phosphoserine modification is found at serine 110. Positions 183–225 (GLTDFKPGYWIGIRYDEPLGKNDGSVNGKRYFECQAKYGAFVK) constitute a CAP-Gly domain. Lysine 219 bears the N6-acetyllysine mark.

This sequence belongs to the TBCB family. In terms of assembly, supercomplex made of cofactors A to E. Cofactors A and D function by capturing and stabilizing tubulin in a quasi-native conformation. Cofactor E binds to the cofactor D-tubulin complex; interaction with cofactor C then causes the release of tubulin polypeptides that are committed to the native state. Cofactors B and E can form a heterodimer which binds to alpha-tubulin and enhances their ability to dissociate tubulin heterodimers. Interacts with GAN. Interacts with DCTN1. In terms of processing, ubiquitinated in the presence of GAN which targets it for degradation by the proteasome. Phosphorylation by PAK1 is required for normal function.

The protein localises to the cytoplasm. The protein resides in the cytoskeleton. Binds to alpha-tubulin folding intermediates after their interaction with cytosolic chaperonin in the pathway leading from newly synthesized tubulin to properly folded heterodimer. Involved in regulation of tubulin heterodimer dissociation. May function as a negative regulator of axonal growth. In Bos taurus (Bovine), this protein is Tubulin-folding cofactor B (TBCB).